The primary structure comprises 441 residues: uncharacterized protein (441 aa).

This is an uncharacterized protein from Methanocaldococcus jannaschii (strain ATCC 43067 / DSM 2661 / JAL-1 / JCM 10045 / NBRC 100440) (Methanococcus jannaschii).